The primary structure comprises 257 residues: Probable amino-acid ABC transporter ATP-binding protein HI_1078 (257 aa).

The 241-residue stretch at 4-244 folds into the ABC transporter domain; that stretch reads LKVSNIQKNF…PQHERTKQFL (241 aa). 36 to 43 serves as a coordination point for ATP; that stretch reads GPSGSGKT.

The protein belongs to the ABC transporter superfamily.

Its subcellular location is the cell inner membrane. In terms of biological role, probably part of a binding-protein-dependent transport system for an amino acid. Probably responsible for energy coupling to the transport system. This is Probable amino-acid ABC transporter ATP-binding protein HI_1078 from Haemophilus influenzae (strain ATCC 51907 / DSM 11121 / KW20 / Rd).